Reading from the N-terminus, the 80-residue chain is MAARALCMLGLVLALLSSSSAEEYVGLSANQCAVPAKDRVDCGYPHVTPKECNNRGCCFDSRIPGVPWCFKPLQEAECTF.

The N-terminal stretch at 1–21 is a signal peptide; the sequence is MAARALCMLGLVLALLSSSSA. Residues 30 to 73 enclose the P-type domain; that stretch reads NQCAVPAKDRVDCGYPHVTPKECNNRGCCFDSRIPGVPWCFKPL. 3 cysteine pairs are disulfide-bonded: Cys32-Cys58, Cys42-Cys57, and Cys52-Cys69.

In terms of assembly, monomer. Homodimer; disulfide-linked. Expressed in goblet cells of the intestines and colon (at protein level). Expressed by goblet cells of small and large intestinal epithelia and also by the uterus. Also expressed in the hypothalamus where it is detected in paraventricular, periventricular and supraoptic nuclei (at protein level).

The protein resides in the secreted. It is found in the extracellular space. It localises to the extracellular matrix. Its subcellular location is the cytoplasm. Functionally, involved in the maintenance and repair of the intestinal mucosa. Promotes the mobility of epithelial cells in healing processes (motogen). This chain is Trefoil factor 3 (TFF3), found in Homo sapiens (Human).